The primary structure comprises 241 residues: MORN repeat-containing protein 3 (241 aa).

An interaction with MDM2 region spans residues 6–35 (CPRKVEPPWKGWDRKAQKNGLRHQVFAVNG). 7 MORN repeats span residues 38–60 (YVGE…KSGA), 62–84 (YEGD…DPET), 91–113 (YSGW…PKEY), 114–136 (YEGE…NGDI), 137–159 (YEGQ…NGNR), 160–182 (YEGI…DHGQ), and 184–205 (FEGY…GRDE). Residues 76–100 (SLSHPDPETGKLRRVYSGWWKGDKK) are interaction with SIRT1. An interaction with TP53 region spans residues 206–240 (APEPTQFPIPKVEILDPDGVLKEALDKLMKPEEEE).

In terms of assembly, interacts with MEIG1. Interacts with TP53, MDM2 and SIRT1; the interactions mediate post-transcriptional modifications of TP53 by MDM2 and SIRT1. In terms of tissue distribution, expressed in testis (at protein level).

The protein localises to the cytoplasmic vesicle. It localises to the secretory vesicle. Its subcellular location is the acrosome. In terms of biological role, assembles a suppression complex (suppresome) by tethering SIRT1 and MDM2 to regulate composite modifications of p53/TP53. Confers both deacetylation-mediated functional inactivation, by SIRT1, and ubiquitination-dependent degradation, by MDM2, of p53/TP53, promoting a proliferative and cell survival behaviors. May play a role in the regulation of spermatogenesis. The chain is MORN repeat-containing protein 3 (Morn3) from Mus musculus (Mouse).